Reading from the N-terminus, the 122-residue chain is Large ribosomal subunit protein uL18 (122 aa).

The span at 1-21 shows a compositional bias: basic residues; that stretch reads MSKLSRKQQTQKRHRRLRRHI. The interval 1–25 is disordered; sequence MSKLSRKQQTQKRHRRLRRHITGTS.

It belongs to the universal ribosomal protein uL18 family. Part of the 50S ribosomal subunit; part of the 5S rRNA/L5/L18/L25 subcomplex. Contacts the 5S and 23S rRNAs.

In terms of biological role, this is one of the proteins that bind and probably mediate the attachment of the 5S RNA into the large ribosomal subunit, where it forms part of the central protuberance. The protein is Large ribosomal subunit protein uL18 of Synechococcus sp. (strain CC9902).